Reading from the N-terminus, the 151-residue chain is Arginine repressor (151 aa).

The protein belongs to the ArgR family.

The protein localises to the cytoplasm. The protein operates within amino-acid biosynthesis; L-arginine biosynthesis [regulation]. Functionally, regulates arginine biosynthesis genes. This Clostridium novyi (strain NT) protein is Arginine repressor.